The sequence spans 488 residues: Cobyric acid synthase (488 aa).

A GATase cobBQ-type domain is found at 255-442 (ALKIAVPVLP…LHGLFGSDAY (188 aa)). Cysteine 337 functions as the Nucleophile in the catalytic mechanism. Residue histidine 434 is part of the active site.

The protein belongs to the CobB/CobQ family. CobQ subfamily.

Its pathway is cofactor biosynthesis; adenosylcobalamin biosynthesis. Functionally, catalyzes amidations at positions B, D, E, and G on adenosylcobyrinic A,C-diamide. NH(2) groups are provided by glutamine, and one molecule of ATP is hydrogenolyzed for each amidation. The chain is Cobyric acid synthase from Rhizobium johnstonii (strain DSM 114642 / LMG 32736 / 3841) (Rhizobium leguminosarum bv. viciae).